The primary structure comprises 76 residues: Exodeoxyribonuclease 7 small subunit (76 aa).

It belongs to the XseB family. As to quaternary structure, heterooligomer composed of large and small subunits.

It is found in the cytoplasm. It carries out the reaction Exonucleolytic cleavage in either 5'- to 3'- or 3'- to 5'-direction to yield nucleoside 5'-phosphates.. Bidirectionally degrades single-stranded DNA into large acid-insoluble oligonucleotides, which are then degraded further into small acid-soluble oligonucleotides. The polypeptide is Exodeoxyribonuclease 7 small subunit (Methylococcus capsulatus (strain ATCC 33009 / NCIMB 11132 / Bath)).